The primary structure comprises 908 residues: MQRIAGITKMVTHRRWLGLLLLLLCVGYSHGMPHVLRFGGIFESIESGPSGAEELAFKFALNTINRNRTLLPNTTLTYDIQRINIHDSFEASRKACDQLSLGVAAIFGPSHSSSANAVQSICNALGVPHIQTKWKHQVSDNRDSFYVNLYPDFSSLSRAILDLVHFFKWKTVTVVYDDSTGLIRLQELIKAPSRYNIRLKIRQLPADTKDAKPLLKEMKRGKEFHVIFDCGHEMAAGILKQALAMGMMTEYYHYIFTTLDLFALDVEPYRYSGVNMTGFRILNTENSQVSSIIEKWSMERLQAPPKPDSGLLDGFMTTDAALMYDAVHVVAVAVQQSPQITVSSLQCNRHKPWRFGNRFMTLIKEAHWDGLTGRINFNRTNGLRTDFDLDVISLKEEGLEKIGTWDPASGLNMTENQKGKTANVTDSLSNRSLVVSTILEEPYVMFKKSDKPLYGNDRFEGYCVDLLRELAAILGFGYELRLVEDGRYGAQDESSGQWNGMVRELMDHKADLAVAPLAITYVREKVIDFSKPFMTLGISILYRKPNGTNPGVFSFLNPLSPDIWMYILLAYLGVSCVLFVIARFSPYEWYNPHPCNPDSDVVENNFTLLNSFWFGVGALMQQGSELMPKALSTRIVGGIWWFFTLIIISSYTANLAAFLTVERMESPIDSADDLAKQTKIEYGVVEDGSTMTFFKKTKISTYDKMWEFMSSRRHSVMVKSIEEGIERVLTSDYAFLMESTTIEFVTQRNCNLTQIGGLIDSKAYGVGTPMGSPYRDKITIAILQLQEEGKLHMMKEKWWRGNGCPEEENKEASALGVQNIGGIFIVLAAGLVLSVFVAVGEFLYKSKQNAQLEKRSFCSAMVDELRVSLKCQRRLKHKPQPPVMVKTDEVINMHTFNDRRLPGKETMA.

Positions 1-31 are cleaved as a signal peptide; that stretch reads MQRIAGITKMVTHRRWLGLLLLLLCVGYSHG. Residues 32 to 561 lie on the Extracellular side of the membrane; that stretch reads MPHVLRFGGI…VFSFLNPLSP (530 aa). 7 N-linked (GlcNAc...) asparagine glycosylation sites follow: N67, N73, N275, N378, N412, N423, and N430. C96 and C347 form a disulfide bridge. 3 residues coordinate L-glutamate: P516, A518, and R523. N546 is a glycosylation site (N-linked (GlcNAc...) asparagine). A helical membrane pass occupies residues 562–582; it reads DIWMYILLAYLGVSCVLFVIA. Topologically, residues 583 to 638 are cytoplasmic; it reads RFSPYEWYNPHPCNPDSDVVENNFTLLNSFWFGVGALMQQGSELMPKALSTRIVGG. Residues 639–659 traverse the membrane as a helical segment; it reads IWWFFTLIIISSYTANLAAFL. The Extracellular portion of the chain corresponds to 660-819; that stretch reads TVERMESPID…KEASALGVQN (160 aa). Positions 689, 690, and 738 each coordinate L-glutamate. A disulfide bridge links C750 with C804. Residue N751 is glycosylated (N-linked (GlcNAc...) asparagine). The chain crosses the membrane as a helical span at residues 820-840; sequence IGGIFIVLAAGLVLSVFVAVG. The Cytoplasmic segment spans residues 841–908; the sequence is EFLYKSKQNA…RRLPGKETMA (68 aa).

Belongs to the glutamate-gated ion channel (TC 1.A.10.1) family. GRIK2 subfamily. In terms of assembly, homotetramer and heterotetramer with GRIK5. Tetramers may be formed by the dimerization of dimers.

It is found in the cell membrane. Its subcellular location is the postsynaptic cell membrane. It carries out the reaction Ca(2+)(in) = Ca(2+)(out). The enzyme catalyses Na(+)(in) = Na(+)(out). Its activity is regulated as follows. Cold receptor activity activated by temperatures between 10-19 degrees Celsius. Ionotropic glutamate receptor that functions as a cation-permeable ligand-gated ion channel, gated by L-glutamate and the glutamatergic agonist kainic acid. L-glutamate acts as an excitatory neurotransmitter at many synapses in the central nervous system. Binding of the excitatory neurotransmitter L-glutamate induces a conformation change, leading to the opening of the cation channel, and thereby converts the chemical signal to an electrical impulse. The receptor then desensitizes rapidly and enters a transient inactive state, characterized by the presence of bound agonist. Its function is as follows. Independent of its ionotropic glutamate receptor activity, acts as a thermoreceptor conferring sensitivity to cold temperatures. Functions in dorsal root ganglion neurons. This is Glutamate receptor ionotropic, kainate 2 from Danio rerio (Zebrafish).